Consider the following 538-residue polypeptide: Lipid scramblase CLPTM1L (538 aa).

At 1–10 the chain is on the cytoplasmic side; sequence MWSGRSSFTS. A helical transmembrane segment spans residues 11-31; the sequence is LVVGVFVVYVVHTCWVMYGIV. At 32 to 284 the chain is on the extracellular side; that stretch reads YTRPCSGDAN…VKGIFVDTNL (253 aa). Residues asparagine 91, asparagine 101, and asparagine 229 are each glycosylated (N-linked (GlcNAc...) asparagine). Residues 285-305 traverse the membrane as a helical segment; it reads YFLALTFFVAAFHLLFDFLAF. Residues 306 to 324 lie on the Cytoplasmic side of the membrane; that stretch reads KNDISFWKKKKSMIGMSTK. A helical membrane pass occupies residues 325–342; it reads AVLWRCFSTVVIFLFLLD. Residues 343-346 lie on the Extracellular side of the membrane; the sequence is EQTS. The helical transmembrane segment at 347–364 threads the bilayer; the sequence is LLVLVPAGVGAAIELWKV. Residues 365 to 402 are Cytoplasmic-facing; sequence KKALKMTIFWRGLMPEFQFGTYSESERKTEEYDTQAMK. The chain crosses the membrane as a helical span at residues 403–423; sequence YLSYLLYPLCVGGAVYSLLNI. The Extracellular segment spans residues 424–428; it reads KYKSW. A helical membrane pass occupies residues 429–449; that stretch reads YSWLINSFVNGVYAFGFLFML. The Cytoplasmic segment spans residues 450 to 538; that stretch reads PQLFVNYKLK…EKATRAPHTD (89 aa).

It belongs to the CLPTM1 family. In terms of tissue distribution, ubiquitously expressed.

It is found in the endoplasmic reticulum membrane. It carries out the reaction a 6-(alpha-D-glucosaminyl)-1-(1,2-diacyl-sn-glycero-3-phospho)-1D-myo-inositol(in) = a 6-(alpha-D-glucosaminyl)-1-(1,2-diacyl-sn-glycero-3-phospho)-1D-myo-inositol(out). It catalyses the reaction 6-(alpha-D-glucosaminyl)-(1-octadecanoyl,2-(9Z)-octadecenoyl-sn-glycero-3-phospho)-1D-myo-inositol(in) = 6-(alpha-D-glucosaminyl)-(1-octadecanoyl,2-(9Z)-octadecenoyl-sn-glycero-3-phospho)-1D-myo-inositol(out). The catalysed reaction is a 1,2-diacyl-sn-glycero-3-phospho-(1D-myo-inositol)(in) = a 1,2-diacyl-sn-glycero-3-phospho-(1D-myo-inositol)(out). The enzyme catalyses a 1,2-diacyl-sn-glycero-3-phosphocholine(in) = a 1,2-diacyl-sn-glycero-3-phosphocholine(out). It carries out the reaction a 1,2-diacyl-sn-glycero-3-phosphoethanolamine(in) = a 1,2-diacyl-sn-glycero-3-phosphoethanolamine(out). Functionally, scramblase that mediates the translocation of glucosaminylphosphatidylinositol (alpha-D-GlcN-(1-6)-(1,2-diacyl-sn-glycero-3-phospho)-1D-myo-inositol, GlcN-PI) across the endoplasmic reticulum (ER) membrane, from the cytosolic leaflet to the luminal leaflet of the ER membrane, where it participates in the biosynthesis of glycosylphosphatidylinositol (GPI). GPI is a lipid glycoconjugate involved in post-translational modification of proteins. Can also translocate 1,2-diacyl-sn-glycero-3-phospho-(1D-myo-inositol) (phosphatidylinositol or PI), as well as several other phospholipids (1,2-diacyl-sn-glycero-3-phosphocholine, 1,2-diacyl-sn-glycero-3-phosphoethanolamine), and N-acetylglucosaminylphosphatidylinositol (GlcNAc-PI) in vitro. The chain is Lipid scramblase CLPTM1L (CLPTM1L) from Homo sapiens (Human).